The primary structure comprises 800 residues: Putative antiporter subunit mnhA2 (800 aa).

Transmembrane regions (helical) follow at residues 1-21, 29-49, 78-98, 109-129, 133-153, 167-187, 209-229, 241-261, 272-292, 300-320, 336-356, 387-407, 424-444, 472-492, 528-548, 595-615, 627-647, 651-671, 676-696, 712-732, and 768-788; these read MSLV…LFTL, VAGY…IMKI, GLSL…FFYA, LPRF…IVIA, ILMY…ISYW, FMIT…LYII, FIPM…QFPF, TPVS…FLLF, VYIY…SLTA, GILA…VGLG, ILVL…KCAL, IVML…GFLS, YGFV…ILTF, PWLF…IFFV, VNLP…LALV, IMIT…TVGF, GPLE…LIFI, LTMV…FIAM, LALT…VSFS, TFKI…IFVA, and LDTM…YTLL.

Belongs to the CPA3 antiporters (TC 2.A.63) subunit A family. May form a heterooligomeric complex that consists of seven subunits: mnhA2, mnhB2, mnhC2, mnhD2, mnhE2, mnhF2 and mnhG2.

Its subcellular location is the cell membrane. The protein is Putative antiporter subunit mnhA2 (mnhA2) of Staphylococcus epidermidis (strain ATCC 12228 / FDA PCI 1200).